The primary structure comprises 157 residues: MNLNATLIAQLVVFFILAWVTMKFVWPPIVKALDERAKKIADGLAAADKAKADLSLAEKKVVDELRKARESAGDVRASAEKQAAKFLDDARAEAARIIAQAREAAEAEAGTAAQRAKEALRDQVAHLAVAGAEKILRREINAQVHADLLANLKTELQ.

The helical transmembrane segment at 7–27 threads the bilayer; the sequence is LIAQLVVFFILAWVTMKFVWP.

It belongs to the ATPase B chain family. As to quaternary structure, F-type ATPases have 2 components, F(1) - the catalytic core - and F(0) - the membrane proton channel. F(1) has five subunits: alpha(3), beta(3), gamma(1), delta(1), epsilon(1). F(0) has three main subunits: a(1), b(2) and c(10-14). The alpha and beta chains form an alternating ring which encloses part of the gamma chain. F(1) is attached to F(0) by a central stalk formed by the gamma and epsilon chains, while a peripheral stalk is formed by the delta and b chains.

Its subcellular location is the cell inner membrane. Its function is as follows. F(1)F(0) ATP synthase produces ATP from ADP in the presence of a proton or sodium gradient. F-type ATPases consist of two structural domains, F(1) containing the extramembraneous catalytic core and F(0) containing the membrane proton channel, linked together by a central stalk and a peripheral stalk. During catalysis, ATP synthesis in the catalytic domain of F(1) is coupled via a rotary mechanism of the central stalk subunits to proton translocation. Component of the F(0) channel, it forms part of the peripheral stalk, linking F(1) to F(0). This Aromatoleum aromaticum (strain DSM 19018 / LMG 30748 / EbN1) (Azoarcus sp. (strain EbN1)) protein is ATP synthase subunit b.